The following is a 328-amino-acid chain: Ribosomal RNA small subunit methyltransferase H (328 aa).

S-adenosyl-L-methionine contacts are provided by residues 37–39, Asp-57, Phe-83, Asp-104, and Gln-111; that span reads GGH.

It belongs to the methyltransferase superfamily. RsmH family.

The protein localises to the cytoplasm. The enzyme catalyses cytidine(1402) in 16S rRNA + S-adenosyl-L-methionine = N(4)-methylcytidine(1402) in 16S rRNA + S-adenosyl-L-homocysteine + H(+). Functionally, specifically methylates the N4 position of cytidine in position 1402 (C1402) of 16S rRNA. The sequence is that of Ribosomal RNA small subunit methyltransferase H from Neisseria meningitidis serogroup B (strain ATCC BAA-335 / MC58).